The chain runs to 377 residues: Phosphatidylglycerol--prolipoprotein diacylglyceryl transferase (377 aa).

Helical transmembrane passes span 18–38 (PVPLRAYALMIIIGIVVAVVV), 48–68 (MDPALAGEIAYWAVPFGIVGA), 93–113 (IWNGGLGIWGAIAGGALGAWL), and 119–139 (GISLALFADAAAPGIILAQAI). Arg-141 is a binding site for a 1,2-diacyl-sn-glycero-3-phospho-(1'-sn-glycerol). 3 consecutive transmembrane segments (helical) span residues 177-197 (QPTFLYEFLWNLVVAAILLLV), 208-228 (LFALYVALYTFGRLWIEMLRI), and 238-258 (RVNIWTSAIVCVGAVVALLVV). A disordered region spans residues 265–377 (DVSPQEQRAL…RTRVERPPAT (113 aa)). 2 stretches are compositionally biased toward low complexity: residues 288 to 297 (AAGETAGETR) and 308 to 344 (GVDVNGADVDGADPSNVNGANVNGADPVNVNVNDADG).

This sequence belongs to the Lgt family.

It is found in the cell membrane. The enzyme catalyses L-cysteinyl-[prolipoprotein] + a 1,2-diacyl-sn-glycero-3-phospho-(1'-sn-glycerol) = an S-1,2-diacyl-sn-glyceryl-L-cysteinyl-[prolipoprotein] + sn-glycerol 1-phosphate + H(+). Its pathway is protein modification; lipoprotein biosynthesis (diacylglyceryl transfer). In terms of biological role, catalyzes the transfer of the diacylglyceryl group from phosphatidylglycerol to the sulfhydryl group of the N-terminal cysteine of a prolipoprotein, the first step in the formation of mature lipoproteins. This chain is Phosphatidylglycerol--prolipoprotein diacylglyceryl transferase, found in Frankia alni (strain DSM 45986 / CECT 9034 / ACN14a).